The chain runs to 335 residues: Holliday junction branch migration complex subunit RuvB (335 aa).

The large ATPase domain (RuvB-L) stretch occupies residues 1–181 (MSERVISPEP…FGLLIRLNLY (181 aa)). ATP-binding positions include L20, R21, G62, K65, T66, T67, 128-130 (EDF), R171, Y181, and R218. T66 lines the Mg(2+) pocket. The segment at 182–252 (SPEDLEKIVT…IAGAGLALLQ (71 aa)) is small ATPAse domain (RuvB-S). A head domain (RuvB-H) region spans residues 255–335 (ELGLDDIDRR…KLNHSQKTLF (81 aa)). Residues R310 and R315 each contribute to the DNA site.

It belongs to the RuvB family. In terms of assembly, homohexamer. Forms an RuvA(8)-RuvB(12)-Holliday junction (HJ) complex. HJ DNA is sandwiched between 2 RuvA tetramers; dsDNA enters through RuvA and exits via RuvB. An RuvB hexamer assembles on each DNA strand where it exits the tetramer. Each RuvB hexamer is contacted by two RuvA subunits (via domain III) on 2 adjacent RuvB subunits; this complex drives branch migration. In the full resolvosome a probable DNA-RuvA(4)-RuvB(12)-RuvC(2) complex forms which resolves the HJ.

It localises to the cytoplasm. It catalyses the reaction ATP + H2O = ADP + phosphate + H(+). Its function is as follows. The RuvA-RuvB-RuvC complex processes Holliday junction (HJ) DNA during genetic recombination and DNA repair, while the RuvA-RuvB complex plays an important role in the rescue of blocked DNA replication forks via replication fork reversal (RFR). RuvA specifically binds to HJ cruciform DNA, conferring on it an open structure. The RuvB hexamer acts as an ATP-dependent pump, pulling dsDNA into and through the RuvAB complex. RuvB forms 2 homohexamers on either side of HJ DNA bound by 1 or 2 RuvA tetramers; 4 subunits per hexamer contact DNA at a time. Coordinated motions by a converter formed by DNA-disengaged RuvB subunits stimulates ATP hydrolysis and nucleotide exchange. Immobilization of the converter enables RuvB to convert the ATP-contained energy into a lever motion, pulling 2 nucleotides of DNA out of the RuvA tetramer per ATP hydrolyzed, thus driving DNA branch migration. The RuvB motors rotate together with the DNA substrate, which together with the progressing nucleotide cycle form the mechanistic basis for DNA recombination by continuous HJ branch migration. Branch migration allows RuvC to scan DNA until it finds its consensus sequence, where it cleaves and resolves cruciform DNA. The sequence is that of Holliday junction branch migration complex subunit RuvB from Methanoregula boonei (strain DSM 21154 / JCM 14090 / 6A8).